We begin with the raw amino-acid sequence, 234 residues long: Putative B3 domain-containing protein At2g18810 (234 aa).

The tract at residues 55 to 88 (CKNQDPEQNPNRVASSPSLCHVKSKRPQKGVSNK) is disordered. Positions 60–72 (PEQNPNRVASSPS) are enriched in polar residues. A DNA-binding region (TF-B3) is located at residues 87–185 (NKPILDMDFL…MLFFALVLSD (99 aa)).

Its subcellular location is the nucleus. The polypeptide is Putative B3 domain-containing protein At2g18810 (Arabidopsis thaliana (Mouse-ear cress)).